Consider the following 147-residue polypeptide: UPF0047 protein sll1880 (147 aa).

This sequence belongs to the UPF0047 family.

This chain is UPF0047 protein sll1880, found in Synechocystis sp. (strain ATCC 27184 / PCC 6803 / Kazusa).